Reading from the N-terminus, the 488-residue chain is Dihydrolipoyl dehydrogenase, mitochondrial (488 aa).

The N-terminal 25 residues, 1–25, are a transit peptide targeting the mitochondrion; that stretch reads MLRINRISNLRTFGQRFFSTEQQDV. FAD-binding positions include 52–61, Lys70, Gly134, and 163–165; these read EKRGKLGGTC and TGS. Cys61 and Cys66 are disulfide-bonded. NAD(+) is bound by residues 200-207, Glu223, Val257, and Gly294; that span reads GGGVIGLE. FAD-binding positions include Asp335 and 341–344; that span reads MLAH. His467 serves as the catalytic Proton acceptor.

This sequence belongs to the class-I pyridine nucleotide-disulfide oxidoreductase family. Requires FAD as cofactor.

It localises to the mitochondrion matrix. The catalysed reaction is N(6)-[(R)-dihydrolipoyl]-L-lysyl-[protein] + NAD(+) = N(6)-[(R)-lipoyl]-L-lysyl-[protein] + NADH + H(+). The polypeptide is Dihydrolipoyl dehydrogenase, mitochondrial (lpd) (Dictyostelium discoideum (Social amoeba)).